The sequence spans 572 residues: Phosphoglucomutase-1 (572 aa).

Substrate-binding positions include Thr23, Arg27, 126–127 (SH), and Lys140. Ser126 (phosphoserine intermediate) is an active-site residue. Position 126 (Ser126) interacts with Mg(2+). Positions 308, 310, and 312 each coordinate Mg(2+). Substrate contacts are provided by residues 312–313 (DR), Thr373, 392–394 (EES), Lys405, and Arg527.

It belongs to the phosphohexose mutase family. Requires Mg(2+) as cofactor. Phosphorylated via a calcium-dependent protein kinase. Very rapidly (within 80 ms) dephosphorylated during triggered trichocyst exocytosis. Post-translationally, O-glycosylated with a short chain of mannose residues.

The protein localises to the cytoplasm. The catalysed reaction is alpha-D-glucose 1-phosphate = alpha-D-glucose 6-phosphate. May be involved in membrane fusion in exocytosis. The protein is Phosphoglucomutase-1 (pp63-1) of Paramecium tetraurelia.